The chain runs to 88 residues: Small ribosomal subunit protein uS17 (88 aa).

It belongs to the universal ribosomal protein uS17 family. As to quaternary structure, part of the 30S ribosomal subunit.

One of the primary rRNA binding proteins, it binds specifically to the 5'-end of 16S ribosomal RNA. In Nitrosospira multiformis (strain ATCC 25196 / NCIMB 11849 / C 71), this protein is Small ribosomal subunit protein uS17.